A 1007-amino-acid polypeptide reads, in one-letter code: Tolloid-like protein 1 (1007 aa).

An N-terminal signal peptide occupies residues 1–25; that stretch reads MNMPSWLIFLLTGWTFCGNFFACGG. Residues 26–142 constitute a propeptide that is removed on maturation; that stretch reads LDYDYPNYEN…GKSKKIRIPR (117 aa). Positions 115–139 are disordered; sequence SGQENTTANSQKVDNNQSGKSKKIR. Residues 116–133 are compositionally biased toward polar residues; sequence GQENTTANSQKVDNNQSG. The Peptidase M12A domain maps to 143 to 342; the sequence is AATSRTERIW…AQARKLYRCP (200 aa). Asparagine 164 carries an N-linked (GlcNAc...) asparagine glycan. 4 disulfides stabilise this stretch: cysteine 185–cysteine 341, cysteine 205–cysteine 227, cysteine 207–cysteine 208, and cysteine 344–cysteine 370. Histidine 235 serves as a coordination point for Zn(2+). The active site involves glutamate 236. Residues histidine 239 and histidine 245 each coordinate Zn(2+). CUB domains follow at residues 344–456 and 457–569; these read CGET…YEAI and CGGE…FLKE. Asparagine 354 and asparagine 385 each carry an N-linked (GlcNAc...) asparagine glycan. 15 disulfide bridges follow: cysteine 397–cysteine 419, cysteine 457–cysteine 483, cysteine 510–cysteine 532, cysteine 573–cysteine 585, cysteine 581–cysteine 594, cysteine 596–cysteine 609, cysteine 613–cysteine 639, cysteine 666–cysteine 688, cysteine 729–cysteine 740, cysteine 736–cysteine 749, cysteine 751–cysteine 764, cysteine 769–cysteine 795, cysteine 822–cysteine 844, cysteine 882–cysteine 912, and cysteine 939–cysteine 961. Residues 569–610 form the EGF-like 1; calcium-binding domain; sequence EEDECARPDNGGCEQRCVNTLGSYKCSCDPGYELAPDKKSCE. The region spanning 613-725 is the CUB 3 domain; sequence CGGLLTKLNG…KGFRAHFFSD (113 aa). A glycan (N-linked (GlcNAc...) asparagine) is linked at asparagine 621. Residues 725–765 form the EGF-like 2; calcium-binding domain; that stretch reads DKDECSKDNGGCQHECINTIGSYVCQCRNGFVLHDNKHDCK. CUB domains lie at 769 to 881 and 882 to 998; these read CEHR…HSTE and CGGR…YRSV.

Zn(2+) is required as a cofactor.

The protein resides in the secreted. Functionally, protease which processes procollagen C-propeptides, such as chordin. Required for the embryonic development. Predominant protease, which in the development, influences dorsal-ventral patterning and skeletogenesis. This chain is Tolloid-like protein 1 (tll1), found in Xenopus laevis (African clawed frog).